We begin with the raw amino-acid sequence, 164 residues long: HTH-type transcriptional regulator IscR (164 aa).

The region spanning 2-131 (RLTSKGRYAV…SSISLEELVN (130 aa)) is the HTH rrf2-type domain. A DNA-binding region (H-T-H motif) is located at residues 28 to 51 (LADISERQGISLSYLEQLFSRLRK). [2Fe-2S] cluster-binding residues include cysteine 92, cysteine 98, and cysteine 104. The segment at 141 to 164 (RQDNDKRRAPNGRAQETINVNLRP) is disordered. The segment covering 154-164 (AQETINVNLRP) has biased composition (polar residues).

[2Fe-2S] cluster serves as cofactor.

Functionally, regulates the transcription of several operons and genes involved in the biogenesis of Fe-S clusters and Fe-S-containing proteins. The sequence is that of HTH-type transcriptional regulator IscR from Photorhabdus laumondii subsp. laumondii (strain DSM 15139 / CIP 105565 / TT01) (Photorhabdus luminescens subsp. laumondii).